A 582-amino-acid chain; its full sequence is Vesicular glutamate transporter 2 (582 aa).

The Cytoplasmic portion of the chain corresponds to 1–71 (MESVKQRILT…CTCFGLPRRY (71 aa)). The chain crosses the membrane as a helical span at residues 72–92 (IIAIMSGLGFCISFGIRCNLG). Residues 93-125 (VAIVDMVNNSTIHRGGKVIKEKAKFNWDPETVG) lie on the Vesicular side of the membrane. N100 and N101 each carry an N-linked (GlcNAc...) asparagine glycan. Residues 126–146 (MIHGSFFWGYIITQIPGGYIA) form a helical membrane-spanning segment. The Cytoplasmic portion of the chain corresponds to 147-148 (SR). The chain crosses the membrane as a helical span at residues 149-169 (LAANRVFGAAILLTSTLNMLI). The Vesicular portion of the chain corresponds to 170 to 177 (PSAARVHY). A helical membrane pass occupies residues 178-198 (GCVIFVRILQGLVEGVTYPAC). At 199-216 (HGIWSKWAPPLERSRLAT) the chain is on the cytoplasmic side. The chain crosses the membrane as a helical span at residues 217 to 237 (TSFCGSYAGAVIAMPLAGILV). The Vesicular portion of the chain corresponds to 238 to 244 (QYTGWSS). A helical membrane pass occupies residues 245 to 265 (VFYVYGSFGMIWYMFWLLVSY). At 266–310 (ESPAKHPTITDEERRYIEESIGESANLLGAMEKFKTPWRKFFTSM) the chain is on the cytoplasmic side. The helical transmembrane segment at 311 to 331 (PVYAIIVANFCRSWTFYLLLI) threads the bilayer. Topologically, residues 332–349 (SQPAYFEEVFGFEISKVG) are vesicular. The helical transmembrane segment at 350-370 (MLSAVPHLVMTIIVPIGGQIA) threads the bilayer. Over 371–386 (DFLRSKQILSTTTVRK) the chain is Cytoplasmic. Residues 387–407 (IMNCGGFGMEATLLLVVGYSH) traverse the membrane as a helical segment. Over 408-409 (TR) the chain is Vesicular. A helical membrane pass occupies residues 410 to 430 (GVAISFLVLAVGFSGFAISGF). The Cytoplasmic segment spans residues 431–443 (NVNHLDIAPRYAS). The helical transmembrane segment at 444-464 (ILMGISNGVGTLSGMVCPIIV) threads the bilayer. At 465–477 (GAMTKNKSREEWQ) the chain is on the vesicular side. A glycan (N-linked (GlcNAc...) asparagine) is linked at N470. Residues 478-498 (YVFLIAALVHYGGVIFYAIFA) traverse the membrane as a helical segment. Residues 499–582 (SGEKQPWADP…YNYKDRDDYS (84 aa)) are Cytoplasmic-facing.

This sequence belongs to the major facilitator superfamily. Sodium/anion cotransporter family. VGLUT subfamily.

It is found in the cytoplasmic vesicle. The protein resides in the secretory vesicle. The protein localises to the synaptic vesicle membrane. Its subcellular location is the synapse. It localises to the synaptosome. It is found in the cell membrane. It carries out the reaction L-glutamate(out) = L-glutamate(in). The catalysed reaction is 3 Na(+)(out) + phosphate(out) = 3 Na(+)(in) + phosphate(in). The enzyme catalyses phosphate(in) = phosphate(out). It catalyses the reaction K(+)(in) + H(+)(out) = K(+)(out) + H(+)(in). It carries out the reaction chloride(in) = chloride(out). Chloride channel activity is allosterically activated by lumenal H(+) and Cl(-) leading to synaptic vesicles acidification. The L-glutamate transport activity is allosterically activated by lumenal H(+) and Cl(-). The allosteric requirement for H(+) efficiently prevents non-vesicular efflux across the plasma membrane. The L-glutamate uniporter activity exhibits a biphasic dependence on chloride concentration. Multifunctional transporter that transports L-glutamate as well as multiple ions such as chloride, proton, potassium, sodium and phosphate. At the synaptic vesicle membrane, mainly functions as a uniporter which transports preferentially L-glutamate but also, phosphate from the cytoplasm into synaptic vesicles at presynaptic nerve terminals of excitatory neural cells. The L-glutamate or phosphate uniporter activity is electrogenic and is driven by the proton electrochemical gradient, mainly by the electrical gradient established by the vacuolar H(+)-ATPase across the synaptic vesicle membrane. In addition, functions as a chloride channel that allows a chloride permeation through the synaptic vesicle membrane therefore affects the proton electrochemical gradient and promotes synaptic vesicles acidification. Moreover, functions as a vesicular K(+)/H(+) antiport allowing to maintain the electrical gradient and to decrease chemical gradient and therefore sustain vesicular L-glutamate uptake. The vesicular H(+)/H(+) antiport activity is electroneutral. At the plasma membrane, following exocytosis, functions as a symporter of Na(+) and phosphate from the extracellular space to the cytoplasm allowing synaptic phosphate homeostasis regulation. The symporter activity is driven by an inside negative membrane potential and is electrogenic. Also involved in the regulation of retinal hyaloid vessel regression during postnatal development. May also play a role in the endocrine L-glutamatergic system of other tissues such as pineal gland and pancreas. The chain is Vesicular glutamate transporter 2 from Bos taurus (Bovine).